The following is a 226-amino-acid chain: Orotidine 5'-phosphate decarboxylase (226 aa).

Substrate-binding positions include aspartate 8, lysine 30, 58-67, threonine 117, arginine 177, glutamine 186, glycine 206, and arginine 207; that span reads DLKIHDIPNT. Lysine 60 functions as the Proton donor in the catalytic mechanism.

Belongs to the OMP decarboxylase family. Type 1 subfamily. Homodimer.

It catalyses the reaction orotidine 5'-phosphate + H(+) = UMP + CO2. Its pathway is pyrimidine metabolism; UMP biosynthesis via de novo pathway; UMP from orotate: step 2/2. Catalyzes the decarboxylation of orotidine 5'-monophosphate (OMP) to uridine 5'-monophosphate (UMP). The polypeptide is Orotidine 5'-phosphate decarboxylase (Campylobacter jejuni subsp. doylei (strain ATCC BAA-1458 / RM4099 / 269.97)).